Consider the following 366-residue polypeptide: 3-dehydroquinate synthase (366 aa).

Residues 107–111 (GVIGD), 131–132 (TS), Lys144, and Lys153 contribute to the NAD(+) site. Zn(2+) is bound by residues Glu186, His251, and His268.

The protein belongs to the sugar phosphate cyclases superfamily. Dehydroquinate synthase family. It depends on Co(2+) as a cofactor. Requires Zn(2+) as cofactor. The cofactor is NAD(+).

It localises to the cytoplasm. The catalysed reaction is 7-phospho-2-dehydro-3-deoxy-D-arabino-heptonate = 3-dehydroquinate + phosphate. It participates in metabolic intermediate biosynthesis; chorismate biosynthesis; chorismate from D-erythrose 4-phosphate and phosphoenolpyruvate: step 2/7. In terms of biological role, catalyzes the conversion of 3-deoxy-D-arabino-heptulosonate 7-phosphate (DAHP) to dehydroquinate (DHQ). This is 3-dehydroquinate synthase from Rippkaea orientalis (strain PCC 8801 / RF-1) (Cyanothece sp. (strain PCC 8801)).